The following is a 250-amino-acid chain: Undecaprenyl-diphosphatase (250 aa).

7 helical membrane passes run 35–55 (DLSV…IFVG), 73–93 (INLT…GVLL), 100–120 (SLSN…ALLI), 146–166 (ALAI…SLLI), 171–191 (EIAL…AGLL), 200–220 (SYSI…LFIL), and 229–249 (LKIF…LGGI).

This sequence belongs to the UppP family.

It localises to the cell inner membrane. The enzyme catalyses di-trans,octa-cis-undecaprenyl diphosphate + H2O = di-trans,octa-cis-undecaprenyl phosphate + phosphate + H(+). Functionally, catalyzes the dephosphorylation of undecaprenyl diphosphate (UPP). Confers resistance to bacitracin. This Thermosipho melanesiensis (strain DSM 12029 / CIP 104789 / BI429) protein is Undecaprenyl-diphosphatase.